A 221-amino-acid chain; its full sequence is NAD(P)H-hydrate epimerase (221 aa).

In terms of domain architecture, YjeF N-terminal spans 10 to 210 (MQQIDNYTIE…DVGMLIPDDF (201 aa)). Residue 58-62 (NNGAD) participates in (6S)-NADPHX binding. K(+) is bound by residues N59 and D120. Residues 124 to 130 (GVGLNNV) and D153 contribute to the (6S)-NADPHX site. T156 serves as a coordination point for K(+).

This sequence belongs to the NnrE/AIBP family. K(+) serves as cofactor.

The catalysed reaction is (6R)-NADHX = (6S)-NADHX. The enzyme catalyses (6R)-NADPHX = (6S)-NADPHX. Its function is as follows. Catalyzes the epimerization of the S- and R-forms of NAD(P)HX, a damaged form of NAD(P)H that is a result of enzymatic or heat-dependent hydration. This is a prerequisite for the S-specific NAD(P)H-hydrate dehydratase to allow the repair of both epimers of NAD(P)HX. The protein is NAD(P)H-hydrate epimerase of Leuconostoc mesenteroides subsp. mesenteroides (strain ATCC 8293 / DSM 20343 / BCRC 11652 / CCM 1803 / JCM 6124 / NCDO 523 / NBRC 100496 / NCIMB 8023 / NCTC 12954 / NRRL B-1118 / 37Y).